A 1407-amino-acid polypeptide reads, in one-letter code: DNA-directed RNA polymerase subunit beta' (1407 aa).

Zn(2+) contacts are provided by Cys70, Cys72, Cys85, and Cys88. 3 residues coordinate Mg(2+): Asp460, Asp462, and Asp464. Residues Cys814, Cys888, Cys895, and Cys898 each coordinate Zn(2+).

Belongs to the RNA polymerase beta' chain family. The RNAP catalytic core consists of 2 alpha, 1 beta, 1 beta' and 1 omega subunit. When a sigma factor is associated with the core the holoenzyme is formed, which can initiate transcription. Requires Mg(2+) as cofactor. Zn(2+) is required as a cofactor.

It carries out the reaction RNA(n) + a ribonucleoside 5'-triphosphate = RNA(n+1) + diphosphate. DNA-dependent RNA polymerase catalyzes the transcription of DNA into RNA using the four ribonucleoside triphosphates as substrates. This chain is DNA-directed RNA polymerase subunit beta', found in Citrobacter koseri (strain ATCC BAA-895 / CDC 4225-83 / SGSC4696).